The following is a 204-amino-acid chain: LexA repressor (204 aa).

Positions 27 to 47 form a DNA-binding region, H-T-H motif; the sequence is VREIGEAVGLASSSTVHGHLA. Active-site for autocatalytic cleavage activity residues include S126 and K164.

It belongs to the peptidase S24 family. As to quaternary structure, homodimer.

The enzyme catalyses Hydrolysis of Ala-|-Gly bond in repressor LexA.. In terms of biological role, represses a number of genes involved in the response to DNA damage (SOS response), including recA and lexA. In the presence of single-stranded DNA, RecA interacts with LexA causing an autocatalytic cleavage which disrupts the DNA-binding part of LexA, leading to derepression of the SOS regulon and eventually DNA repair. The protein is LexA repressor of Listeria innocua serovar 6a (strain ATCC BAA-680 / CLIP 11262).